A 179-amino-acid polypeptide reads, in one-letter code: MNKLELIKSSIKSIPNHPKEGIIFRDITSLTEVPEAFQATIDLIIERYKSKGITKVIGTESRGFIFGAPVALALNVPFILVRKPGKLPRETIAQSYQLEYGQDTLEMHVSSIQAGDNVLVIDDLLATGGTIEATVKLVERLQGQVKHAAFVISLPDLGGEVRLRELGVEPFTLVEFSGH.

The protein belongs to the purine/pyrimidine phosphoribosyltransferase family. As to quaternary structure, homodimer.

It is found in the cytoplasm. It carries out the reaction AMP + diphosphate = 5-phospho-alpha-D-ribose 1-diphosphate + adenine. It participates in purine metabolism; AMP biosynthesis via salvage pathway; AMP from adenine: step 1/1. In terms of biological role, catalyzes a salvage reaction resulting in the formation of AMP, that is energically less costly than de novo synthesis. This Histophilus somni (strain 129Pt) (Haemophilus somnus) protein is Adenine phosphoribosyltransferase.